A 207-amino-acid polypeptide reads, in one-letter code: Ribonuclease HII (207 aa).

Residues 5 to 207 form the RNase H type-2 domain; sequence PLIIGVDEAG…APVRALLRPC (203 aa). Positions 11, 12, and 117 each coordinate a divalent metal cation.

Belongs to the RNase HII family. The cofactor is Mn(2+). Requires Mg(2+) as cofactor.

It is found in the cytoplasm. The catalysed reaction is Endonucleolytic cleavage to 5'-phosphomonoester.. In terms of biological role, endonuclease that specifically degrades the RNA of RNA-DNA hybrids. This is Ribonuclease HII from Hyphomonas neptunium (strain ATCC 15444).